A 424-amino-acid chain; its full sequence is Histidine--tRNA ligase (424 aa).

The protein belongs to the class-II aminoacyl-tRNA synthetase family. As to quaternary structure, homodimer.

It localises to the cytoplasm. It carries out the reaction tRNA(His) + L-histidine + ATP = L-histidyl-tRNA(His) + AMP + diphosphate + H(+). This chain is Histidine--tRNA ligase, found in Salmonella dublin (strain CT_02021853).